The following is an 859-amino-acid chain: Leucine--tRNA ligase (859 aa).

Positions 42-52 (PYPSGRLHMGH) match the 'HIGH' region motif. The short motif at 618–622 (KMSKS) is the 'KMSKS' region element. Lys621 is an ATP binding site.

It belongs to the class-I aminoacyl-tRNA synthetase family.

The protein localises to the cytoplasm. The enzyme catalyses tRNA(Leu) + L-leucine + ATP = L-leucyl-tRNA(Leu) + AMP + diphosphate. The protein is Leucine--tRNA ligase of Shewanella oneidensis (strain ATCC 700550 / JCM 31522 / CIP 106686 / LMG 19005 / NCIMB 14063 / MR-1).